The sequence spans 527 residues: Plant-specific TFIIB-related protein PTF2 (527 aa).

Residues Met1 to Glu30 form a TFIIB-type zinc finger.

Can form homodimer. Interacts with TBP2. As to expression, expressed in shoot apical meristems, root tips, primordia of lateral roots, inflorescences, developing pollen grains and embryos.

The protein resides in the nucleus. Its function is as follows. Plant-specific TFIIB-related protein that plays important roles in pollen germination and embryogenesis, possibly by regulating gene expression through interaction with TBP2 and the subunits of RNA polymerases. Binds double-stranded DNA in vitro. The sequence is that of Plant-specific TFIIB-related protein PTF2 from Arabidopsis thaliana (Mouse-ear cress).